Reading from the N-terminus, the 563-residue chain is Eukaryotic translation initiation factor 3 subunit D-1 (563 aa).

The tract at residues 98–167 is disordered; it reads VQKPPHQRGR…GPPPKMRESS (70 aa). Basic residues predominate over residues 100–121; that stretch reads KPPHQRGRFRNMRNSRSGRGRN. T128 carries the post-translational modification Phosphothreonine. The RNA gate stretch occupies residues 291-305; that stretch reads EFDLLTVNETSVEPP.

Belongs to the eIF-3 subunit D family. Component of the eukaryotic translation initiation factor 3 (eIF-3) complex. The eIF-3 complex interacts with pix.

The protein localises to the cytoplasm. Functionally, mRNA cap-binding component of the eukaryotic translation initiation factor 3 (eIF-3) complex, which is involved in protein synthesis of a specialized repertoire of mRNAs and, together with other initiation factors, stimulates binding of mRNA and methionyl-tRNAi to the 40S ribosome. The eIF-3 complex specifically targets and initiates translation of a subset of mRNAs involved in cell proliferation. In the eIF-3 complex, eif3d specifically recognizes and binds the 7-methylguanosine cap of a subset of mRNAs. The polypeptide is Eukaryotic translation initiation factor 3 subunit D-1 (Drosophila virilis (Fruit fly)).